Reading from the N-terminus, the 343-residue chain is Multidrug resistance protein MdtN (343 aa).

The Cytoplasmic portion of the chain corresponds to 1-12 (MESTPKKAPRSK). A helical; Signal-anchor for type II membrane protein transmembrane segment spans residues 13 to 33 (FPALLVVALALVALVFVIWRV). Topologically, residues 34-343 (DSAPSTNDAY…ASAVANLEPQ (310 aa)) are periplasmic.

It belongs to the membrane fusion protein (MFP) (TC 8.A.1) family. As to quaternary structure, could be part of a tripartite efflux system composed of MdtN, MdtO and MdtP.

Its subcellular location is the cell inner membrane. Could be involved in resistance to puromycin, acriflavine and tetraphenylarsonium chloride. In Shigella flexneri, this protein is Multidrug resistance protein MdtN (mdtN).